The primary structure comprises 882 residues: Alanine--tRNA ligase (882 aa).

The Zn(2+) site is built by H570, H574, C672, and H676.

Belongs to the class-II aminoacyl-tRNA synthetase family. Zn(2+) is required as a cofactor.

The protein resides in the cytoplasm. The catalysed reaction is tRNA(Ala) + L-alanine + ATP = L-alanyl-tRNA(Ala) + AMP + diphosphate. Catalyzes the attachment of alanine to tRNA(Ala) in a two-step reaction: alanine is first activated by ATP to form Ala-AMP and then transferred to the acceptor end of tRNA(Ala). Also edits incorrectly charged Ser-tRNA(Ala) and Gly-tRNA(Ala) via its editing domain. The protein is Alanine--tRNA ligase of Xanthomonas oryzae pv. oryzae (strain MAFF 311018).